We begin with the raw amino-acid sequence, 466 residues long: Histidine--tRNA ligase (466 aa).

The protein belongs to the class-II aminoacyl-tRNA synthetase family. Homodimer.

Its subcellular location is the cytoplasm. It catalyses the reaction tRNA(His) + L-histidine + ATP = L-histidyl-tRNA(His) + AMP + diphosphate + H(+). The protein is Histidine--tRNA ligase (hisS) of Bifidobacterium longum (strain NCC 2705).